A 170-amino-acid polypeptide reads, in one-letter code: RNA pyrophosphohydrolase (170 aa).

A Nudix hydrolase domain is found at 8–151 (PYRPNVGIAL…KKALYAELIP (144 aa)). Positions 42-63 (GGIDEGETPQVAALREMGEEIG) match the Nudix box motif.

It belongs to the Nudix hydrolase family. RppH subfamily. A divalent metal cation is required as a cofactor.

Its function is as follows. Accelerates the degradation of transcripts by removing pyrophosphate from the 5'-end of triphosphorylated RNA, leading to a more labile monophosphorylated state that can stimulate subsequent ribonuclease cleavage. This is RNA pyrophosphohydrolase from Gluconobacter oxydans (strain 621H) (Gluconobacter suboxydans).